A 144-amino-acid chain; its full sequence is Small ribosomal subunit protein bS6 (144 aa).

A disordered region spans residues 99–144 (KASPLAPCEEKGEEGKAEDAADELTTFGMADDDDLGDDDDTVEAGI). Over residues 106-117 (CEEKGEEGKAED) the composition is skewed to basic and acidic residues. The segment covering 128–144 (ADDDDLGDDDDTVEAGI) has biased composition (acidic residues).

It belongs to the bacterial ribosomal protein bS6 family.

In terms of biological role, binds together with bS18 to 16S ribosomal RNA. This is Small ribosomal subunit protein bS6 from Magnetococcus marinus (strain ATCC BAA-1437 / JCM 17883 / MC-1).